The sequence spans 290 residues: Large ribosomal subunit protein uL3 (290 aa).

N5-methylglutamine is present on glutamine 152. The segment at 250 to 290 (ARLAEEQAAAEAESLAQAEAEIAAEGSDAAPEGDADKKDGE) is disordered. The segment covering 255–274 (EQAAAEAESLAQAEAEIAAE) has biased composition (low complexity).

It belongs to the universal ribosomal protein uL3 family. In terms of assembly, part of the 50S ribosomal subunit. Forms a cluster with proteins L14 and L19. Methylated by PrmB.

One of the primary rRNA binding proteins, it binds directly near the 3'-end of the 23S rRNA, where it nucleates assembly of the 50S subunit. In Jannaschia sp. (strain CCS1), this protein is Large ribosomal subunit protein uL3.